The following is a 359-amino-acid chain: Stearoyl-CoA desaturase (359 aa).

Over 1–72 (MPAHLLQEEI…EGPKPKLEYV (72 aa)) the chain is Cytoplasmic. Residues 73–93 (WRNIILMGLLHLGALYGITLI) form a helical membrane-spanning segment. Asn-75 lines the substrate pocket. The Lumenal segment spans residues 94-97 (PTCK). A helical transmembrane segment spans residues 98 to 118 (IYTFLWVLFYYMMSALGITAG). Topologically, residues 119–217 (VHRLWSHRTY…EKLVMFQRRY (99 aa)) are cytoplasmic. Fe cation is bound by residues His-120 and His-125. The Histidine box-1 signature appears at 120–125 (HRLWSH). Positions 148, 155, and 156 each coordinate substrate. His-157, His-160, and His-161 together coordinate Fe cation. Residues 157–161 (HRAHH) carry the Histidine box-2 motif. Substrate is bound by residues Arg-188 and Lys-189. Ser-203 carries the post-translational modification Phosphoserine. A helical membrane pass occupies residues 218–237 (YKPGVLLLCFILPTLVPWYL). At 238 to 241 (WGET) the chain is on the lumenal side. The chain crosses the membrane as a helical span at residues 242–263 (FQNSLFFATLLRYAVVLNATWL). Substrate is bound at residue Trp-262. At 264 to 359 (VNSAAHMYGY…RTGEESCKSG (96 aa)) the chain is on the cytoplasmic side. His-269, His-298, His-301, and His-302 together coordinate Fe cation. A Histidine box-3 motif is present at residues 298–302 (HNYHH).

It belongs to the fatty acid desaturase type 1 family. It depends on Fe(2+) as a cofactor.

It localises to the endoplasmic reticulum membrane. The catalysed reaction is octadecanoyl-CoA + 2 Fe(II)-[cytochrome b5] + O2 + 2 H(+) = (9Z)-octadecenoyl-CoA + 2 Fe(III)-[cytochrome b5] + 2 H2O. It catalyses the reaction hexadecanoyl-CoA + 2 Fe(II)-[cytochrome b5] + O2 + 2 H(+) = (9Z)-hexadecenoyl-CoA + 2 Fe(III)-[cytochrome b5] + 2 H2O. In terms of biological role, stearoyl-CoA desaturase that utilizes O(2) and electrons from reduced cytochrome b5 to introduce the first double bond into saturated fatty acyl-CoA substrates. Catalyzes the insertion of a cis double bond at the delta-9 position into fatty acyl-CoA substrates including palmitoyl-CoA and stearoyl-CoA. Gives rise to a mixture of 16:1 and 18:1 unsaturated fatty acids. Plays an important role in lipid biosynthesis. Plays an important role in regulating the expression of genes that are involved in lipogenesis and in regulating mitochondrial fatty acid oxidation. Plays an important role in body energy homeostasis. Contributes to the biosynthesis of membrane phospholipids, cholesterol esters and triglycerides. This chain is Stearoyl-CoA desaturase (SCD), found in Capra hircus (Goat).